Here is a 491-residue protein sequence, read N- to C-terminus: Cobyric acid synthase (491 aa).

Residues 250–439 (EVTIAVIRLP…LHGIFDNGAW (190 aa)) form the GATase cobBQ-type domain. The active-site Nucleophile is the C331. H431 is an active-site residue.

Belongs to the CobB/CobQ family. CobQ subfamily.

It participates in cofactor biosynthesis; adenosylcobalamin biosynthesis. Functionally, catalyzes amidations at positions B, D, E, and G on adenosylcobyrinic A,C-diamide. NH(2) groups are provided by glutamine, and one molecule of ATP is hydrogenolyzed for each amidation. In Synechococcus elongatus (strain ATCC 33912 / PCC 7942 / FACHB-805) (Anacystis nidulans R2), this protein is Cobyric acid synthase.